The primary structure comprises 241 residues: MAKWGSPFVFALACLALSWRVYGDDFDLYDALGDPTEKPKPKPPKPPKSPTHDSGDLDLSDFFDTPVKTTTKSPRLPPKQPDLRFSTTTKKPRTTKIPPKKSDPNDFDLSDALDGNNGKGDISDSDLDDILNDGYNPDKKKGGGGGGGGGGRATGQGDNDGSDTGFGSQAETGTIAGIASALAMALIGAVSSYISYQQKKFCFSIQEGLNAEYVKGEHMEAVVSEEPQVKYSVVESQSAIP.

The N-terminal stretch at 1–23 is a signal peptide; it reads MAKWGSPFVFALACLALSWRVYG. Topologically, residues 24–173 are extracellular; sequence DDFDLYDALG…TGFGSQAETG (150 aa). The tract at residues 30-168 is disordered; the sequence is DALGDPTEKP…NDGSDTGFGS (139 aa). Positions 143–154 are enriched in gly residues; the sequence is GGGGGGGGGRAT. The chain crosses the membrane as a helical span at residues 174–196; it reads TIAGIASALAMALIGAVSSYISY. Residues 197–241 lie on the Cytoplasmic side of the membrane; it reads QQKKFCFSIQEGLNAEYVKGEHMEAVVSEEPQVKYSVVESQSAIP.

The protein belongs to the CD99 family.

The protein localises to the cell membrane. The protein resides in the cell junction. Its function is as follows. May function as a homophilic adhesion molecule. This is CD99 antigen-like protein 2 (cd99l2) from Xenopus tropicalis (Western clawed frog).